The following is a 287-amino-acid chain: L-ascorbate peroxidase 3 (287 aa).

A2 carries the N-acetylalanine modification. H40 acts as the Proton acceptor in catalysis. The tract at residues 46-66 (DAQSKTGGPNGSIRNEEEHTH) is disordered. H160 is a binding site for heme b. Residues T161, T177, and D184 each coordinate K(+). The helical transmembrane segment at 259 to 279 (ILAQSAFGVAVAAAVVAFGYF) threads the bilayer. Residues 281–287 (EIRKRMK) carry the AKR2A-binding sequence (ABS) required for peroxisome membrane targeting motif.

This sequence belongs to the peroxidase family. Ascorbate peroxidase subfamily. Interacts via its C-terminal region with AKR2A and AKR2B. Requires heme b as cofactor.

The protein localises to the peroxisome membrane. The protein resides in the glyoxysome membrane. The catalysed reaction is L-ascorbate + H2O2 = L-dehydroascorbate + 2 H2O. Plays a key role in hydrogen peroxide removal. The chain is L-ascorbate peroxidase 3 (APX3) from Arabidopsis thaliana (Mouse-ear cress).